Consider the following 486-residue polypeptide: Protein nucleotidyltransferase YdiU (486 aa).

ATP is bound by residues glycine 90, glycine 92, arginine 93, lysine 113, aspartate 125, glycine 126, arginine 176, and arginine 183. The active-site Proton acceptor is the aspartate 252. Mg(2+)-binding residues include asparagine 253 and aspartate 262. Aspartate 262 contacts ATP.

Belongs to the SELO family. Requires Mg(2+) as cofactor. Mn(2+) serves as cofactor.

The catalysed reaction is L-seryl-[protein] + ATP = 3-O-(5'-adenylyl)-L-seryl-[protein] + diphosphate. The enzyme catalyses L-threonyl-[protein] + ATP = 3-O-(5'-adenylyl)-L-threonyl-[protein] + diphosphate. It carries out the reaction L-tyrosyl-[protein] + ATP = O-(5'-adenylyl)-L-tyrosyl-[protein] + diphosphate. It catalyses the reaction L-histidyl-[protein] + UTP = N(tele)-(5'-uridylyl)-L-histidyl-[protein] + diphosphate. The catalysed reaction is L-seryl-[protein] + UTP = O-(5'-uridylyl)-L-seryl-[protein] + diphosphate. The enzyme catalyses L-tyrosyl-[protein] + UTP = O-(5'-uridylyl)-L-tyrosyl-[protein] + diphosphate. In terms of biological role, nucleotidyltransferase involved in the post-translational modification of proteins. It can catalyze the addition of adenosine monophosphate (AMP) or uridine monophosphate (UMP) to a protein, resulting in modifications known as AMPylation and UMPylation. This chain is Protein nucleotidyltransferase YdiU, found in Pseudomonas aeruginosa (strain LESB58).